A 727-amino-acid polypeptide reads, in one-letter code: Probable acyl-activating enzyme 18, peroxisomal (727 aa).

Positions 725–727 match the Microbody targeting signal motif; that stretch reads SRI.

The protein belongs to the ATP-dependent AMP-binding enzyme family. As to expression, expressed in flowers.

It is found in the peroxisome. In terms of biological role, may be involved in the peroxisomal activation of 2,4-dichlorophenoxybutyric acid (2,4-DB), a precursor of active auxins that inhibit root growth. This chain is Probable acyl-activating enzyme 18, peroxisomal (AAE18), found in Arabidopsis thaliana (Mouse-ear cress).